Here is a 257-residue protein sequence, read N- to C-terminus: Protein YIPF5 (257 aa).

Over 1 to 124 the chain is Cytoplasmic; that stretch reads MSGFDNLNSG…RAADGSIMNE (124 aa). The interaction with Sec23 stretch occupies residues 75 to 106; sequence PTTPQPFYGDSFEEEPPLLEELGINFDHIWQK. Residues 125–145 traverse the membrane as a helical segment; that stretch reads TDLAGPVVFCLAFGATLLLAG. K146 is a topological domain (lumenal). Residues 147 to 167 form a helical membrane-spanning segment; that stretch reads IQFGYVYGISAIGCLGMFCLL. Residues 168–173 lie on the Cytoplasmic side of the membrane; it reads NLMSMT. A helical transmembrane segment spans residues 174 to 194; that stretch reads GVSFGCVASVLGYCLLPMILL. Residues 195–196 lie on the Lumenal side of the membrane; it reads SS. Residues 197–217 form a helical membrane-spanning segment; sequence FAVVFSLQGMVGILLTATIIG. Residues 218-236 are Cytoplasmic-facing; it reads WCSFSASKIFISALAMDGQ. The helical transmembrane segment at 237–257 threads the bilayer; that stretch reads QLLVAYPCALLYGVFALISVF.

This sequence belongs to the YIP1 family. As to quaternary structure, interacts with the COPII coat components Sec23 (SEC23A and/or SEC23B) and Sec24 (SEC24A and/or SEC24B). Interacts with YIF1A. May interact with RAB1A. Interacts with YIPF3 and YIPF4. As to expression, ubiquitously expressed.

It localises to the golgi apparatus. Its subcellular location is the cis-Golgi network membrane. The protein localises to the cytoplasmic vesicle. The protein resides in the COPII-coated vesicle. It is found in the endoplasmic reticulum membrane. Plays a role in transport between endoplasmic reticulum and Golgi. In pancreatic beta cells, required to transport proinsulin from endoplasmic reticulum into the Golgi. This chain is Protein YIPF5, found in Mus musculus (Mouse).